A 188-amino-acid chain; its full sequence is dCTP deaminase (188 aa).

Residues 111 to 116 (KSTYAR), 135 to 137 (TLE), Gln156, Tyr170, and Gln180 each bind dCTP. Glu137 (proton donor/acceptor) is an active-site residue.

It belongs to the dCTP deaminase family. As to quaternary structure, homotrimer.

The enzyme catalyses dCTP + H2O + H(+) = dUTP + NH4(+). It functions in the pathway pyrimidine metabolism; dUMP biosynthesis; dUMP from dCTP (dUTP route): step 1/2. Functionally, catalyzes the deamination of dCTP to dUTP. The sequence is that of dCTP deaminase from Aromatoleum aromaticum (strain DSM 19018 / LMG 30748 / EbN1) (Azoarcus sp. (strain EbN1)).